We begin with the raw amino-acid sequence, 1976 residues long: Myosin-10 (1976 aa).

Omega-N-methylarginine is present on Arg-18. The Myosin N-terminal SH3-like domain maps to 31 to 81 (TAKKLVWIPSERHGFEAASIKEERGDEVLVELAENGKKAMVNKDDIQKMNP). Residues 85–783 (SKVEDMAELT…VLAHLEEERD (699 aa)) enclose the Myosin motor domain. Residue 178–185 (GESGAGKT) coordinates ATP. Lys-442 carries the post-translational modification N6-acetyllysine. The segment at 661 to 683 (LTKLMATLRNTNPNFVRCIIPNH) is actin-binding. One can recognise an IQ domain in the interval 786–815 (ITDIIIFFQAVCRGYLARKAFAKKQQQLSA). Residues 845–1976 (LQVTRQEEEL…INETQPPQSE (1132 aa)) adopt a coiled-coil conformation. Residues 1126 to 1149 (DFESEKASRNKAEKQKRDLSEELE) are disordered. The segment covering 1129–1149 (SEKASRNKAEKQKRDLSEELE) has biased composition (basic and acidic residues). The residue at position 1145 (Ser-1145) is a Phosphoserine. N6-acetyllysine is present on residues Lys-1241, Lys-1301, and Lys-1645. 2 disordered regions span residues 1697–1718 (ASSERARRHAEQERDELADEIA) and 1874–1976 (KANA…PQSE). Residues 1698–1708 (SSERARRHAEQ) are compositionally biased toward basic and acidic residues. Arg-1930 bears the Omega-N-methylarginine mark. Phosphoserine occurs at positions 1935, 1937, 1938, and 1939. Arg-1940 is modified (omega-N-methylarginine). A phosphoserine mark is found at Ser-1952 and Ser-1956. Position 1960 is a phosphothreonine (Thr-1960). Over residues 1967–1976 (INETQPPQSE) the composition is skewed to polar residues. Ser-1975 is modified (phosphoserine).

Belongs to the TRAFAC class myosin-kinesin ATPase superfamily. Myosin family. In terms of assembly, myosin is a hexameric protein that consists of 2 heavy chain subunits (MHC), 2 alkali light chain subunits (MLC) and 2 regulatory light chain subunits (MLC-2). Interacts with PLEKHG6. Interacts with ECPAS. Interacts with KIF26B. Interacts with LARP6. Interacts with MCC. Interacts with CFAP95. In terms of processing, phosphorylated by ABL2.

The protein resides in the cell projection. Its subcellular location is the lamellipodium. Cellular myosin that appears to play a role in cytokinesis, cell shape, and specialized functions such as secretion and capping. Involved with LARP6 in the stabilization of type I collagen mRNAs for CO1A1 and CO1A2. During cell spreading, plays an important role in cytoskeleton reorganization, focal contacts formation (in the central part but not the margins of spreading cells), and lamellipodial extension; this function is mechanically antagonized by MYH9. The polypeptide is Myosin-10 (MYH10) (Bos taurus (Bovine)).